The sequence spans 418 residues: Gamma-glutamyl phosphate reductase (418 aa).

Belongs to the gamma-glutamyl phosphate reductase family.

It localises to the cytoplasm. The enzyme catalyses L-glutamate 5-semialdehyde + phosphate + NADP(+) = L-glutamyl 5-phosphate + NADPH + H(+). It participates in amino-acid biosynthesis; L-proline biosynthesis; L-glutamate 5-semialdehyde from L-glutamate: step 2/2. Functionally, catalyzes the NADPH-dependent reduction of L-glutamate 5-phosphate into L-glutamate 5-semialdehyde and phosphate. The product spontaneously undergoes cyclization to form 1-pyrroline-5-carboxylate. This Geotalea daltonii (strain DSM 22248 / JCM 15807 / FRC-32) (Geobacter daltonii) protein is Gamma-glutamyl phosphate reductase.